Here is a 179-residue protein sequence, read N- to C-terminus: Large ribosomal subunit protein uL5 (179 aa).

The protein belongs to the universal ribosomal protein uL5 family. In terms of assembly, part of the 50S ribosomal subunit; part of the 5S rRNA/L5/L18/L25 subcomplex. Contacts the 5S rRNA and the P site tRNA. Forms a bridge to the 30S subunit in the 70S ribosome.

This is one of the proteins that bind and probably mediate the attachment of the 5S RNA into the large ribosomal subunit, where it forms part of the central protuberance. In the 70S ribosome it contacts protein S13 of the 30S subunit (bridge B1b), connecting the 2 subunits; this bridge is implicated in subunit movement. Contacts the P site tRNA; the 5S rRNA and some of its associated proteins might help stabilize positioning of ribosome-bound tRNAs. The sequence is that of Large ribosomal subunit protein uL5 from Microcystis aeruginosa (strain NIES-843 / IAM M-2473).